A 355-amino-acid polypeptide reads, in one-letter code: Guanine nucleotide-binding protein G(i) subunit alpha-2 (355 aa).

G2 carries the N-myristoyl glycine lipid modification. Residue C3 is the site of S-palmitoyl cysteine attachment. The G-alpha domain occupies R32–F355. The interval K35–T48 is G1 motif. GTP contacts are provided by residues G40 to S47, L176 to T182, D201 to Q205, N270 to D273, and A327. Positions 47 and 182 each coordinate Mg(2+). The G2 motif stretch occupies residues D174–T182. The segment at F197 to R206 is G3 motif. Residues I266–D273 are G4 motif. Positions T325–T330 are G5 motif.

It belongs to the G-alpha family. G(i/o/t/z) subfamily. In terms of assembly, g proteins are composed of 3 units; alpha, beta and gamma. The alpha chain contains the guanine nucleotide binding site. In this context, interacts with GNB2. Interacts with UNC5B. Interacts with GPSM1. Interacts with RGS12 and RGS14. Interacts (inactive GDP-bound form) with NUCB1 (via GBA motif); the interaction leads to activation of GNAI3. Interacts (inactive GDP-bound form) with CCDC88C/DAPLE (via GBA motif). Interacts (inactive GDP-bound form) with CCDC8A/GIV (via GBA motif). Interacts with CXCR1 and CXCR2.

It is found in the cytoplasm. It localises to the cytoskeleton. Its subcellular location is the microtubule organizing center. The protein localises to the centrosome. The protein resides in the cell membrane. It is found in the membrane. Its function is as follows. Guanine nucleotide-binding proteins (G proteins) are involved as modulators or transducers in various transmembrane signaling systems. The G(i) proteins are involved in hormonal regulation of adenylate cyclase: they inhibit the cyclase in response to beta-adrenergic stimuli. May play a role in cell division. This is Guanine nucleotide-binding protein G(i) subunit alpha-2 (Gnai2) from Mus musculus (Mouse).